We begin with the raw amino-acid sequence, 91 residues long: Small ribosomal subunit protein uS19 (91 aa).

The protein belongs to the universal ribosomal protein uS19 family.

Functionally, protein S19 forms a complex with S13 that binds strongly to the 16S ribosomal RNA. The protein is Small ribosomal subunit protein uS19 of Janthinobacterium sp. (strain Marseille) (Minibacterium massiliensis).